The primary structure comprises 246 residues: Biosynthetic peptidoglycan transglycosylase (246 aa).

The helical transmembrane segment at 20 to 42 threads the bilayer; sequence SLRWVLAAPLLFAAASVLQVLAL.

The protein belongs to the glycosyltransferase 51 family.

It is found in the cell inner membrane. It catalyses the reaction [GlcNAc-(1-&gt;4)-Mur2Ac(oyl-L-Ala-gamma-D-Glu-L-Lys-D-Ala-D-Ala)](n)-di-trans,octa-cis-undecaprenyl diphosphate + beta-D-GlcNAc-(1-&gt;4)-Mur2Ac(oyl-L-Ala-gamma-D-Glu-L-Lys-D-Ala-D-Ala)-di-trans,octa-cis-undecaprenyl diphosphate = [GlcNAc-(1-&gt;4)-Mur2Ac(oyl-L-Ala-gamma-D-Glu-L-Lys-D-Ala-D-Ala)](n+1)-di-trans,octa-cis-undecaprenyl diphosphate + di-trans,octa-cis-undecaprenyl diphosphate + H(+). Its pathway is cell wall biogenesis; peptidoglycan biosynthesis. In terms of biological role, peptidoglycan polymerase that catalyzes glycan chain elongation from lipid-linked precursors. The chain is Biosynthetic peptidoglycan transglycosylase from Xanthomonas campestris pv. campestris (strain 8004).